Here is a 122-residue protein sequence, read N- to C-terminus: Small ribosomal subunit protein bS6 (122 aa).

A disordered region spans residues Thr-97–Ala-122. Over residues Val-106 to Ala-122 the composition is skewed to basic and acidic residues.

Belongs to the bacterial ribosomal protein bS6 family.

In terms of biological role, binds together with bS18 to 16S ribosomal RNA. This is Small ribosomal subunit protein bS6 from Janthinobacterium sp. (strain Marseille) (Minibacterium massiliensis).